A 322-amino-acid polypeptide reads, in one-letter code: Mas-related G-protein coupled receptor member X4 (322 aa).

Residues 1–31 lie on the Extracellular side of the membrane; the sequence is MDPTVPVFGTKLTPINGREETPCYNQTLSFT. N-linked (GlcNAc...) asparagine glycosylation is present at asparagine 25. Residues 32–52 form a helical membrane-spanning segment; sequence VLTCIISLVGLTGNAVVLWLL. Residues 53-60 are Cytoplasmic-facing; sequence GYRMRRNA. Residues 61–81 form a helical membrane-spanning segment; the sequence is VSIYILNLAAADFLFLSFQII. The Extracellular segment spans residues 82 to 96; the sequence is RLPLRLINISHLIRK. Asparagine 89 carries N-linked (GlcNAc...) asparagine glycosylation. The helical transmembrane segment at 97–117 threads the bilayer; sequence ILVSVMTFPYFTGLSMLSAIS. Residues 118–137 lie on the Cytoplasmic side of the membrane; that stretch reads TERCLSVLWPIWYRCRRPTH. Residues 138–158 traverse the membrane as a helical segment; that stretch reads LSAVVCVLLWGLSLLFSMLEW. Over 159–177 the chain is Extracellular; it reads RFCDFLFSGADSSWCETSD. Residues 178–198 traverse the membrane as a helical segment; the sequence is FIPVAWLIFLCVVLCVSSLVL. Residues 199–218 are Cytoplasmic-facing; sequence LVRILCGSRKMPLTRLYVTI. A helical transmembrane segment spans residues 219-239; that stretch reads LLTVLVFLLCGLPFGILGALI. Residues 240–254 are Extracellular-facing; sequence YRMHLNLEVLYCHVY. The helical transmembrane segment at 255-275 threads the bilayer; sequence LVCMSLSSLNSSANPIIYFFV. Residues 276-322 lie on the Cytoplasmic side of the membrane; that stretch reads GSFRQRQNRQNLKLVLQRALQDKPEVDKGEGQLPEESLELSGSRLGP. The segment at 299-322 is disordered; that stretch reads PEVDKGEGQLPEESLELSGSRLGP.

This sequence belongs to the G-protein coupled receptor 1 family. Mas subfamily. Uniquely localized in a subset of small dorsal root and trigeminal sensory neurons.

The protein localises to the cell membrane. In terms of biological role, orphan receptor. Probably involved in the function of nociceptive neurons. May regulate nociceptor function and/or development, including the sensation or modulation of pain. Potently activated by enkephalins. In Homo sapiens (Human), this protein is Mas-related G-protein coupled receptor member X4 (MRGPRX4).